A 297-amino-acid chain; its full sequence is MKIGLIGLGKMGINIGKQFIDRNHQVVGYDVNQAAVDELKAYGAEGTTNLKEFISLLHPPRILWVMVPHGIVDAVLRDVSPLLSKGDMIIEAGNSHYKESIRRYNQMKEAGIHYLDAGTSGGMEGARHGACFMVGGDHEAWEIVEPLFRDTAVENGYLYAGEAGSGHFLKMIHNGIEYGMMAAIGEGFEVLENSQFDFDYEKVARVWNHGSVIRSWLMGLTERAFAKDAKLDQIKGIMHSSGEGKWTVETALDLQTATPVIAMSLMMRYRSLTDDTFTGKVVAALRNEFGGHATEKK.

NAD(+)-binding positions include Gly-7–Gly-12 and Asn-94. Substrate is bound by residues Asn-94 and Ser-120–Gly-122. Lys-170 functions as the Proton acceptor in the catalytic mechanism. His-173 to Asn-174 serves as a coordination point for substrate. Residue Glu-177 is the Proton donor of the active site. Tyr-178 and Arg-268 together coordinate substrate.

This sequence belongs to the 6-phosphogluconate dehydrogenase family.

May act as NAD-dependent 6-P-gluconate dehydrogenase. This is Putative 6-phosphogluconate dehydrogenase YqeC (yqeC) from Bacillus subtilis (strain 168).